Here is a 4981-residue protein sequence, read N- to C-terminus: Protocadherin Fat 4 (4981 aa).

Positions 1 to 42 (MNLAANRAPGRRRLPLPSPSLCQLLRVWGLLSLLPGSARVQA) are cleaved as a signal peptide. At 43–4505 (AEQRQVFQVM…PDEISLPLWA (4463 aa)) the chain is on the extracellular side. 34 Cadherin domains span residues 44-135 (EQRQ…APVF), 136-250 (PDPS…PPVF), 251-353 (GSSH…DPVV), 359-475 (PATS…PPVF), 476-582 (EQQV…KPVF), 584-689 (QPEG…SPVF), 690-793 (YPVQ…PPVF), 794-893 (SQAA…APHF), 894-996 (LQAV…PPVF), 997-1100 (DQIS…RPLF), 1101-1210 (NSTN…APKF), 1211-1315 (LKDF…TPSF), 1316-1420 (PKST…PPSF), 1421-1529 (PPGD…VPMF), 1529-1629 (FISQ…GPVF), 1630-1740 (TQTK…PPVF), 1741-1841 (PTDT…TPRF), 1842-1944 (SRPV…PPVF), 1945-2051 (SMSS…PPMF), 2051-2154 (FLSP…NPVF), 2155-2259 (AQAM…VPVF), 2260-2364 (ELSP…VPTF), 2365-2468 (ANNM…PPRF), 2469-2569 (QHHP…FPKV), 2570-2671 (RAKE…APTF), 2672-2775 (EEDP…APRF), 2775-2874 (FSQI…TPRF), 2875-2985 (SRPS…PPQF), 2986-3091 (LQNK…TPEF), 3092-3196 (SQNH…SPVF), 3197-3300 (VPDE…VPRF), 3301-3406 (VSKL…PPVF), 3407-3512 (SLST…GPVL), and 3511-3622 (VLTV…VEIF). N-linked (GlcNAc...) asparagine glycosylation is found at Asn84 and Asn237. Asn393, Asn416, Asn435, Asn483, Asn551, Asn615, Asn676, Asn721, Asn825, Asn880, Asn948, Asn1085, Asn1101, Asn1104, Asn1225, Asn1296, Asn1389, and Asn1514 each carry an N-linked (GlcNAc...) asparagine glycan. N-linked (GlcNAc...) asparagine glycosylation is found at Asn1828, Asn1899, Asn1967, and Asn2119. Residues Asn2387 and Asn2432 are each glycosylated (N-linked (GlcNAc...) asparagine). N-linked (GlcNAc...) asparagine glycans are attached at residues Asn2923, Asn2939, Asn3038, Asn3142, Asn3219, Asn3394, and Asn3479. Asn3708 and Asn3760 each carry an N-linked (GlcNAc...) asparagine glycan. The EGF-like 1 domain maps to 3804-3862 (DHDPCIHGPCQNGGSCLRRLAVGSALKIQESLPVIIVANEPLQPSQCKCVPGYAGSWCE). 12 cysteine pairs are disulfide-bonded: Cys3808–Cys3819, Cys3813–Cys3850, Cys3852–Cys3861, Cys3868–Cys3879, Cys3873–Cys3888, Cys3890–Cys3899, Cys3906–Cys3917, Cys3911–Cys3926, Cys3928–Cys3937, Cys3944–Cys3955, Cys3949–Cys3964, and Cys3966–Cys3975. Positions 3864-3900 (DIDECLPAPCHNGGTCHNLVGGFSCSCPEGFTGRACE) constitute an EGF-like 2; calcium-binding domain. In terms of domain architecture, EGF-like 3; calcium-binding spans 3902–3938 (DINECLPSPCKHGAVCQNFPGGFNCVCKTGYTGKMCE). The 37-residue stretch at 3940-3976 (SVNYCECNPCFNGGSCQSGVESYYCHCPFGVFGKHCE) folds into the EGF-like 4 domain. Residues 3977–4161 (LNSYGFEELS…LAAQGILDQC (185 aa)) enclose the Laminin G-like 1 domain. Asn4019 is a glycosylation site (N-linked (GlcNAc...) asparagine). 4 disulfides stabilise this stretch: Cys4135–Cys4161, Cys4168–Cys4179, Cys4173–Cys4188, and Cys4190–Cys4199. An EGF-like 5 domain is found at 4164 to 4200 (LEGTCARNPCQHGGTCVDFWSWQQCQCMEGLTGKYCE). The 181-residue stretch at 4219–4399 (YHMSQSEKRE…KTDPSVKIGC (181 aa)) folds into the Laminin G-like 2 domain. 2 N-linked (GlcNAc...) asparagine glycosylation sites follow: Asn4269 and Asn4314. 4 cysteine pairs are disulfide-bonded: Cys4366-Cys4399, Cys4431-Cys4442, Cys4436-Cys4452, and Cys4454-Cys4463. The EGF-like 6 domain occupies 4427–4464 (PPGDCASHPCQNGGSCEPGLLSGYTCSCPESHTGRTCE). The chain crosses the membrane as a helical span at residues 4506–4526 (VPAIVGSCATALALLVLSLIL). The Cytoplasmic segment spans residues 4527–4981 (CNQCRGKMPK…AKDGEAEQYV (455 aa)). Disordered stretches follow at residues 4535-4585 (PKNP…PDII), 4677-4713 (PSSYGQGLRTSSLSHSACPTPNPLSRHSPAPFSKPSA), 4753-4773 (RRSKSPQAMASHGSRPGSRLK), 4796-4911 (RLNT…PAAA), and 4957-4981 (AAGNEEGKSGAAKPAAKDGEAEQYV). Residues 4677-4701 (PSSYGQGLRTSSLSHSACPTPNPLS) are compositionally biased toward polar residues. A necessary and sufficient for interaction with MPDZ region spans residues 4708-4797 (FSKPSAFYRN…GLSIEEVERL (90 aa)). The span at 4811–4823 (DHGRSSSEEDCRR) shows a compositional bias: basic and acidic residues. Ser4878 carries the phosphoserine modification. Positions 4971–4981 (AAKDGEAEQYV) are enriched in basic and acidic residues.

In terms of assembly, heterophilic interaction with DCHS1; this interaction affects their respective protein levels. Interacts (via cytoplasmic domain) with MPDZ. Forms a complex with PALS1 and MPDZ. Widely expressed.

It is found in the membrane. Functionally, cadherins are cell-cell interaction molecules. FAT4 plays a role in the maintenance of planar cell polarity as well as in inhibition of YAP1-mediated neuroprogenitor cell proliferation and differentiation. In Mus musculus (Mouse), this protein is Protocadherin Fat 4 (Fat4).